We begin with the raw amino-acid sequence, 351 residues long: MLPEDRLIQIVERFEYLEARLNAGPAAEEIAAISREYAELKPVVAQIAQWRSVQEDIRQAQAMLADHEMRELAQDELSRLRAGLPALEHALRVALLPRDAADARPAILEIRPGTGGEEAALFAGDLLDMYRRFAESQGWQFQMLELVRSDLGGVREAMARIEGEGVFARLKYESGVHRVQRVPETESGGRIHTSAATVAVLPEAEEVDVDIPAADIRIDTMRASGAGGQHVNTTDSAVRITHLPTGIVVTSSEKSQHQNRANAMAVLRARLYDMERSRADAERAADRKSQVGSGDRSERIRTYNFPQGRMTDHRIGLTLYALDRIMQGEIGEIVEALAAHDQAARLAAQGE.

N5-methylglutamine is present on Gln-229. Positions 279–300 are disordered; sequence ADAERAADRKSQVGSGDRSERI.

This sequence belongs to the prokaryotic/mitochondrial release factor family. In terms of processing, methylated by PrmC. Methylation increases the termination efficiency of RF1.

It is found in the cytoplasm. In terms of biological role, peptide chain release factor 1 directs the termination of translation in response to the peptide chain termination codons UAG and UAA. This is Peptide chain release factor 1 from Paracoccus denitrificans (strain Pd 1222).